Here is a 378-residue protein sequence, read N- to C-terminus: MIISASTDYRAAAKAKLPPFLFHYIDGGSYGEHTLRRNTDDLADIALRQRVLSDMSELSLETELFGEKMALPIALSPVGLTGMYARRGEVQAAQAAEAKGIPFTLSTVSVCPIEEVAPSIHRPIWFQLYVLKDRGFMKNVLERAKAAGVKNLVFTVDMPVPGARYRDMHSGMSGPNAAMRRVLQAMAHPSWAWDVGLLGKPHDLGNISKYRGSPTKLEDYIGWLGANFDPSISWKDLEWIRDFWDGPMIIKGILDTEDAKDAVRFGADGIVVSNHGGRQLDGVLSTVQALPAIADAVKGDLKILVDSGIRTGLDVVRMLALGADCTMLGRSFIYALAAQGRAGVENLLDLYEKEMRVAMTLTGAKSIAELSRDSLVKR.

The region spanning 1 to 378 (MIISASTDYR…ELSRDSLVKR (378 aa)) is the FMN hydroxy acid dehydrogenase domain. Residue Tyr-24 participates in substrate binding. Ser-106 and Gln-127 together coordinate FMN. Tyr-129 is a substrate binding site. Thr-155 lines the FMN pocket. Substrate is bound at residue Arg-164. Lys-251 contacts FMN. His-275 serves as the catalytic Proton acceptor. Arg-278 serves as a coordination point for substrate. 306–330 (DSGIRTGLDVVRMLALGADCTMLGR) contacts FMN.

This sequence belongs to the FMN-dependent alpha-hydroxy acid dehydrogenase family. The cofactor is FMN.

The protein localises to the cell inner membrane. It catalyses the reaction (S)-lactate + A = pyruvate + AH2. Catalyzes the conversion of L-lactate to pyruvate. Is coupled to the respiratory chain. This chain is L-lactate dehydrogenase, found in Vibrio cholerae serotype O1 (strain ATCC 39315 / El Tor Inaba N16961).